Consider the following 425-residue polypeptide: Ribulose bisphosphate carboxylase (425 aa).

The Proton acceptor role is filled by K153. K155 contributes to the substrate binding site. Positions 179, 181, and 182 each coordinate Mg(2+). K179 is subject to N6-carboxylysine. H269 (proton acceptor) is an active-site residue. Residues R270, H302, 353-355, and 375-378 each bind substrate; these read SGG and QAGG.

The protein belongs to the RuBisCO large chain family. Type III subfamily. In terms of assembly, homodimer. In contrast to form I RuBisCO, the form III RuBisCO is composed solely of large subunits. The cofactor is Mg(2+).

The enzyme catalyses 2 (2R)-3-phosphoglycerate + 2 H(+) = D-ribulose 1,5-bisphosphate + CO2 + H2O. It catalyses the reaction D-ribulose 1,5-bisphosphate + O2 = 2-phosphoglycolate + (2R)-3-phosphoglycerate + 2 H(+). Its activity is regulated as follows. Reversibly inhibited by O(2). In terms of biological role, catalyzes the addition of molecular CO(2) and H(2)O to ribulose 1,5-bisphosphate (RuBP), generating two molecules of 3-phosphoglycerate (3-PGA). Functions in an archaeal AMP degradation pathway, together with AMP phosphorylase and R15P isomerase. The sequence is that of Ribulose bisphosphate carboxylase from Methanocaldococcus jannaschii (strain ATCC 43067 / DSM 2661 / JAL-1 / JCM 10045 / NBRC 100440) (Methanococcus jannaschii).